We begin with the raw amino-acid sequence, 599 residues long: UvrABC system protein C (599 aa).

The GIY-YIG domain maps to 18–96 (QLPGVYRMLG…IKQHRPPYNI (79 aa)). One can recognise a UVR domain in the interval 207–242 (KELNQELIAKMEEAAEQLAFEKAMFYRDRLGLLREV).

It belongs to the UvrC family. In terms of assembly, interacts with UvrB in an incision complex.

Its subcellular location is the cytoplasm. In terms of biological role, the UvrABC repair system catalyzes the recognition and processing of DNA lesions. UvrC both incises the 5' and 3' sides of the lesion. The N-terminal half is responsible for the 3' incision and the C-terminal half is responsible for the 5' incision. The protein is UvrABC system protein C of Acinetobacter baylyi (strain ATCC 33305 / BD413 / ADP1).